The primary structure comprises 292 residues: E3 ubiquitin-protein ligase RNF144A (292 aa).

The TRIAD supradomain stretch occupies residues proline 16–leucine 236. Cysteine 20, cysteine 23, cysteine 43, cysteine 46, cysteine 111, cysteine 116, cysteine 135, cysteine 138, cysteine 143, cysteine 146, histidine 151, cysteine 156, cysteine 185, and cysteine 188 together coordinate Zn(2+). The RING-type 1 zinc finger occupies cysteine 20 to cysteine 70. The segment at glutamine 91–cysteine 156 adopts an IBR-type zinc-finger fold. The segment at cysteine 185–cysteine 214 adopts an RING-type 2; atypical zinc-finger fold. The active site involves cysteine 198. Positions 203, 206, 211, 214, 226, and 232 each coordinate Zn(2+). The helical transmembrane segment at valine 250 to leucine 270 threads the bilayer.

Belongs to the RBR family. RNF144 subfamily. As to quaternary structure, self-associates. Interacts with UBE2L3. Post-translationally, autoubiquitinated.

It is found in the cell membrane. It localises to the cytoplasmic vesicle membrane. The enzyme catalyses [E2 ubiquitin-conjugating enzyme]-S-ubiquitinyl-L-cysteine + [acceptor protein]-L-lysine = [E2 ubiquitin-conjugating enzyme]-L-cysteine + [acceptor protein]-N(6)-ubiquitinyl-L-lysine.. The protein operates within protein modification; protein ubiquitination. In terms of biological role, E3 ubiquitin-protein ligase which accepts ubiquitin from E2 ubiquitin-conjugating enzymes UBE2L3 and UBE2L6 in the form of a thioester and then directly transfers the ubiquitin to targeted substrates. Mediates the ubiquitination and degradation of the DNA damage kinase PRKDC during DNA damage. Positively regulates DNA virus or exogenous cytosolic DNA-triggered innate immune response by mediating STING1 ubiquitination and increasing its 'Lys-6'-linked ubiquitination and translocation from the endoplasmic reticulum to the Golgi leading to downstream signaling pathways. Plays a positive role in EGF-dependent cell proliferation by prolonging EGF/EGFR signaling during EGF stimulation through EGFR ubiquitination. Increases ERK activity independently of EGFR signaling by promoting polyubiquitination and subsequent degradation of VRK3 in the cytosol. This Mus musculus (Mouse) protein is E3 ubiquitin-protein ligase RNF144A (Rnf144a).